Consider the following 80-residue polypeptide: Protein CEBPZOS (80 aa).

Residues 15-31 (GVLAAELVGVAGAYCLF) traverse the membrane as a helical segment.

It localises to the mitochondrion membrane. In Mus musculus (Mouse), this protein is Protein CEBPZOS.